A 192-amino-acid chain; its full sequence is HTH-type transcriptional regulator Hpr (192 aa).

The 145-residue stretch at 12-156 (SIIFSHKFAQ…LLSIVRHVYG (145 aa)) folds into the HTH marR-type domain. A DNA-binding region (H-T-H motif) is located at residues 62–85 (ISDIAKFGVMHVSTAFNFSKKLEE).

Homodimer.

Negative regulator of protease production and sporulation. This chain is HTH-type transcriptional regulator Hpr, found in Halalkalibacterium halodurans (strain ATCC BAA-125 / DSM 18197 / FERM 7344 / JCM 9153 / C-125) (Bacillus halodurans).